The primary structure comprises 99 residues: NADH-quinone oxidoreductase subunit K (99 aa).

Transmembrane regions (helical) follow at residues 3-23, 28-48, and 62-82; these read PANYLILSGLLFTIGATGVLV, IVVFMSIELMLNAVNLTLVTF, and FFVMVVAAAEVVVGLAIILAI.

This sequence belongs to the complex I subunit 4L family. NDH-1 is composed of 14 different subunits. Subunits NuoA, H, J, K, L, M, N constitute the membrane sector of the complex.

The protein resides in the cell membrane. The catalysed reaction is a quinone + NADH + 5 H(+)(in) = a quinol + NAD(+) + 4 H(+)(out). NDH-1 shuttles electrons from NADH, via FMN and iron-sulfur (Fe-S) centers, to quinones in the respiratory chain. The immediate electron acceptor for the enzyme in this species is believed to be a menaquinone. Couples the redox reaction to proton translocation (for every two electrons transferred, four hydrogen ions are translocated across the cytoplasmic membrane), and thus conserves the redox energy in a proton gradient. The sequence is that of NADH-quinone oxidoreductase subunit K from Parafrankia sp. (strain EAN1pec).